Reading from the N-terminus, the 367-residue chain is Glutamate 5-kinase (367 aa).

Lysine 10 is an ATP binding site. Positions 50, 137, and 149 each coordinate substrate. ATP-binding positions include 169–170 (TD) and 211–217 (TGGMSTK). One can recognise a PUA domain in the interval 275–353 (AGEITVDEGA…QQIDAILGYE (79 aa)).

The protein belongs to the glutamate 5-kinase family.

The protein resides in the cytoplasm. It catalyses the reaction L-glutamate + ATP = L-glutamyl 5-phosphate + ADP. Its pathway is amino-acid biosynthesis; L-proline biosynthesis; L-glutamate 5-semialdehyde from L-glutamate: step 1/2. Its function is as follows. Catalyzes the transfer of a phosphate group to glutamate to form L-glutamate 5-phosphate. This is Glutamate 5-kinase from Salmonella agona (strain SL483).